We begin with the raw amino-acid sequence, 229 residues long: MAQKSKAYRAAAEKIEAGKYYTPTEAVALAKETGSAKFNSTVEVALKLGVDPRKADQMVRGTVILPHGTGKTARVIVFATGPAAEAAIAAGADEVGGSDLIEKVAGGYTDFDSAVSTPELMGQVGRLGKVLGPRGLMPNPKTGTVTPDVAKAVFDIKGGKIEFRVDKHANVHFVVGKAGFTADQLNDNIKVALDEVVRLKPSAAKGRYIQKGAVSTTFGPGIPLDVNAI.

It belongs to the universal ribosomal protein uL1 family. In terms of assembly, part of the 50S ribosomal subunit.

In terms of biological role, binds directly to 23S rRNA. The L1 stalk is quite mobile in the ribosome, and is involved in E site tRNA release. Functionally, protein L1 is also a translational repressor protein, it controls the translation of the L11 operon by binding to its mRNA. This chain is Large ribosomal subunit protein uL1, found in Leifsonia xyli subsp. xyli (strain CTCB07).